The primary structure comprises 112 residues: MAKFKIKTGDLVQVITGKNKGEQGKVLRVITETSRVVVEGVNVVTKHKRANAQGEAGGLVKSEAPIHISNVMLGDPETGKPTRVGYRTETVERDGKQKTVRVRVSKSTGKDL.

A disordered region spans residues 92–112 (ERDGKQKTVRVRVSKSTGKDL).

This sequence belongs to the universal ribosomal protein uL24 family. In terms of assembly, part of the 50S ribosomal subunit.

Its function is as follows. One of two assembly initiator proteins, it binds directly to the 5'-end of the 23S rRNA, where it nucleates assembly of the 50S subunit. Functionally, one of the proteins that surrounds the polypeptide exit tunnel on the outside of the subunit. This is Large ribosomal subunit protein uL24 from Kocuria rhizophila (strain ATCC 9341 / DSM 348 / NBRC 103217 / DC2201).